Reading from the N-terminus, the 509-residue chain is Maturase K (509 aa).

Belongs to the intron maturase 2 family. MatK subfamily.

The protein localises to the plastid. Its subcellular location is the chloroplast. Its function is as follows. Usually encoded in the trnK tRNA gene intron. Probably assists in splicing its own and other chloroplast group II introns. The chain is Maturase K from Eucommia ulmoides (Hardy rubber tree).